Consider the following 154-residue polypeptide: Transmembrane protein 35B (154 aa).

The N-terminal stretch at 1–22 is a signal peptide; it reads MALLLSVLRVLLGGFFALVGLA. A run of 3 helical transmembrane segments spans residues 63 to 83, 85 to 105, and 112 to 132; these read IAVG…PPML, EISN…LAAL, and CIPA…QLLA.

Belongs to the DoxX family.

The protein localises to the membrane. The chain is Transmembrane protein 35B from Homo sapiens (Human).